The primary structure comprises 225 residues: Uridylate kinase (225 aa).

9–10 (GS) lines the ATP pocket. Residue Gly-44 coordinates UMP. ATP-binding residues include Gly-45 and Arg-49. UMP-binding positions include Asp-66 and 114 to 120 (THPGHTT). ATP-binding residues include Thr-140, Asn-141, Tyr-146, and Asp-149.

The protein belongs to the UMP kinase family. In terms of assembly, homohexamer.

It localises to the cytoplasm. The catalysed reaction is UMP + ATP = UDP + ADP. The protein operates within pyrimidine metabolism; CTP biosynthesis via de novo pathway; UDP from UMP (UMPK route): step 1/1. With respect to regulation, inhibited by UTP. Its function is as follows. Catalyzes the reversible phosphorylation of UMP to UDP. The protein is Uridylate kinase of Pyrococcus abyssi (strain GE5 / Orsay).